A 122-amino-acid polypeptide reads, in one-letter code: MGFRVLVLIVMVTTSALPFTFSEESGRSPFRPALRSEEAQALRHGLTLLLARRADGQTPDMHQPEMRRPEMRRPEVRRPEVRQPEFAESPVGQKRWDAYDCIQFCMRPEMRHTYAQCLSICT.

The first 22 residues, 1–22 (MGFRVLVLIVMVTTSALPFTFS), serve as a signal peptide directing secretion. Positions 23–96 (EESGRSPFRP…AESPVGQKRW (74 aa)) are excised as a propeptide. The disordered stretch occupies residues 53–89 (RADGQTPDMHQPEMRRPEMRRPEVRRPEVRQPEFAES). Residues 62–85 (HQPEMRRPEMRRPEVRRPEVRQPE) show a composition bias toward basic and acidic residues. Cystine bridges form between Cys-101-Cys-121 and Cys-105-Cys-117.

As to expression, expressed by the venom duct.

The protein resides in the secreted. In Conus anabathrum floridanus (Florida cone), this protein is Conotoxin flf14c.